Reading from the N-terminus, the 212-residue chain is Large ribosomal subunit protein uL4 (212 aa).

Residues Asn43–Lys52 are compositionally biased toward polar residues. Positions Asn43–Ser77 are disordered. Basic residues predominate over residues Gly60–Gly71.

Belongs to the universal ribosomal protein uL4 family. In terms of assembly, part of the 50S ribosomal subunit.

One of the primary rRNA binding proteins, this protein initially binds near the 5'-end of the 23S rRNA. It is important during the early stages of 50S assembly. It makes multiple contacts with different domains of the 23S rRNA in the assembled 50S subunit and ribosome. In terms of biological role, forms part of the polypeptide exit tunnel. This is Large ribosomal subunit protein uL4 from Trichodesmium erythraeum (strain IMS101).